The chain runs to 106 residues: Cell division protein FtsB (106 aa).

The Cytoplasmic portion of the chain corresponds to 1-3 (MGK). A helical transmembrane segment spans residues 4 to 21 (LTLLLLALLGWLQYSLWL). Topologically, residues 22–106 (GKNGVHDYVR…ASSSQNNLQK (85 aa)) are periplasmic. The stretch at 40–62 (QGSNAKLKARNDQLFAEIDDLNG) forms a coiled coil.

This sequence belongs to the FtsB family. Part of a complex composed of FtsB, FtsL and FtsQ.

It localises to the cell inner membrane. Functionally, essential cell division protein. May link together the upstream cell division proteins, which are predominantly cytoplasmic, with the downstream cell division proteins, which are predominantly periplasmic. The chain is Cell division protein FtsB from Serratia proteamaculans (strain 568).